The chain runs to 664 residues: Protein-arginine deiminase type-3 (664 aa).

Belongs to the protein arginine deiminase family. Ca(2+) serves as cofactor. Epidermis and hair follicles.

Its subcellular location is the cytoplasm. The catalysed reaction is L-arginyl-[protein] + H2O = L-citrullyl-[protein] + NH4(+). In terms of biological role, catalyzes the deimination of arginine residues of proteins. This is Protein-arginine deiminase type-3 (Padi3) from Mus musculus (Mouse).